We begin with the raw amino-acid sequence, 48 residues long: Bacteriocin plantaricin-A (48 aa).

A propeptide spanning residues 1–25 is cleaved from the precursor; that stretch reads MKIQIKGMKQLSNKEMQKIVGGKSS.

In terms of assembly, active plantaricin A is composed of an alpha chain and a beta chain.

Its function is as follows. This heat stable bacteriocin inhibits the growth of closely related Lactobacillus species. It may act as a pore-forming protein, creating a channel in the cell membrane through a 'barrel stave' mechanism. In Lactiplantibacillus plantarum (strain ATCC BAA-793 / NCIMB 8826 / WCFS1) (Lactobacillus plantarum), this protein is Bacteriocin plantaricin-A (plnA).